A 356-amino-acid chain; its full sequence is N-methyltransferase 4 (356 aa).

S-adenosyl-L-methionine contacts are provided by residues 93 to 94, 128 to 136, and 155 to 160; these read QS, ILDIGCGFG, and TNSAEQ.

This sequence belongs to the CFA/CMAS family. Expressed in stems, roots, flower buds and leaves.

Probable N-methyltransferase not involved in benzylisoquinoline metabolism. Shows no detectable activity with (s)-coclaurine, (R)- or (S)-reticuline, papaverine or (R,S)-tetrahydropapaverine. This chain is N-methyltransferase 4 (NMT4), found in Papaver somniferum (Opium poppy).